The sequence spans 240 residues: UDP-2,3-diacylglucosamine hydrolase (240 aa).

The Mn(2+) site is built by D8, H10, D41, N79, and H114. 79 to 80 is a binding site for substrate; sequence NR. Substrate is bound by residues D122, S160, N164, K167, and H195. Positions 195 and 197 each coordinate Mn(2+).

It belongs to the LpxH family. Requires Mn(2+) as cofactor.

Its subcellular location is the cell inner membrane. The enzyme catalyses UDP-2-N,3-O-bis[(3R)-3-hydroxytetradecanoyl]-alpha-D-glucosamine + H2O = 2-N,3-O-bis[(3R)-3-hydroxytetradecanoyl]-alpha-D-glucosaminyl 1-phosphate + UMP + 2 H(+). It participates in glycolipid biosynthesis; lipid IV(A) biosynthesis; lipid IV(A) from (3R)-3-hydroxytetradecanoyl-[acyl-carrier-protein] and UDP-N-acetyl-alpha-D-glucosamine: step 4/6. Functionally, hydrolyzes the pyrophosphate bond of UDP-2,3-diacylglucosamine to yield 2,3-diacylglucosamine 1-phosphate (lipid X) and UMP by catalyzing the attack of water at the alpha-P atom. Involved in the biosynthesis of lipid A, a phosphorylated glycolipid that anchors the lipopolysaccharide to the outer membrane of the cell. The sequence is that of UDP-2,3-diacylglucosamine hydrolase from Escherichia coli O81 (strain ED1a).